We begin with the raw amino-acid sequence, 178 residues long: Large ribosomal subunit protein uL6 (178 aa).

This sequence belongs to the universal ribosomal protein uL6 family. As to quaternary structure, part of the 50S ribosomal subunit.

Functionally, this protein binds to the 23S rRNA, and is important in its secondary structure. It is located near the subunit interface in the base of the L7/L12 stalk, and near the tRNA binding site of the peptidyltransferase center. This chain is Large ribosomal subunit protein uL6, found in Halalkalibacterium halodurans (strain ATCC BAA-125 / DSM 18197 / FERM 7344 / JCM 9153 / C-125) (Bacillus halodurans).